Reading from the N-terminus, the 1161-residue chain is Immunoglobulin superfamily member 3 (1161 aa).

The N-terminal stretch at 1–16 (MGTAALLILLAGVSWA) is a signal peptide. Residues 17 to 1091 (QREVAIQPGP…LQSTICANDA (1075 aa)) are Extracellular-facing. Ig-like C2-type domains lie at 18–135 (REVA…AKVN), 140–258 (PDTL…WFPL), 272–382 (PTDK…RGPS), 402–523 (PLRT…WQLL), 541–651 (FAVT…RETS), 674–796 (PRLQ…EETS), 806–930 (PDAN…WYRR), and 947–1063 (PQLQ…WYLL). 2 cysteine pairs are disulfide-bonded: C39/C117 and C164/C242. The short motif at 246 to 248 (EWI) is the EWI motif element. 6 disulfides stabilise this stretch: C298–C372, C428–C507, C562–C641, C697–C775, C831–C914, and C970–C1047. The helical transmembrane segment at 1092-1112 (LFYLVFFYPFPIFGILIITIL) threads the bilayer. Over 1113 to 1161 (LVRFRHRPTGKPGEGKNGVPLLWIKEPHLNYSPTCLEPPVLSIHPGTID) the chain is Cytoplasmic.

The protein localises to the membrane. The polypeptide is Immunoglobulin superfamily member 3 (igsf3) (Xenopus tropicalis (Western clawed frog)).